We begin with the raw amino-acid sequence, 340 residues long: L-threonine 3-dehydrogenase (340 aa).

Cys38 contacts Zn(2+). Residues Thr40 and His43 each act as charge relay system in the active site. 6 residues coordinate Zn(2+): His63, Glu64, Cys93, Cys96, Cys99, and Cys107. NAD(+)-binding positions include Ile175, Asp195, Arg200, 261–263 (LGI), and 285–286 (IY).

Belongs to the zinc-containing alcohol dehydrogenase family. In terms of assembly, homotetramer. Zn(2+) is required as a cofactor.

It localises to the cytoplasm. It carries out the reaction L-threonine + NAD(+) = (2S)-2-amino-3-oxobutanoate + NADH + H(+). It functions in the pathway amino-acid degradation; L-threonine degradation via oxydo-reductase pathway; glycine from L-threonine: step 1/2. In terms of biological role, catalyzes the NAD(+)-dependent oxidation of L-threonine to 2-amino-3-ketobutyrate. The sequence is that of L-threonine 3-dehydrogenase from Stenotrophomonas maltophilia (strain K279a).